Reading from the N-terminus, the 289-residue chain is ATP synthase gamma chain (289 aa).

It belongs to the ATPase gamma chain family. In terms of assembly, F-type ATPases have 2 components, CF(1) - the catalytic core - and CF(0) - the membrane proton channel. CF(1) has five subunits: alpha(3), beta(3), gamma(1), delta(1), epsilon(1). CF(0) has three main subunits: a, b and c.

The protein localises to the cell inner membrane. Its function is as follows. Produces ATP from ADP in the presence of a proton gradient across the membrane. The gamma chain is believed to be important in regulating ATPase activity and the flow of protons through the CF(0) complex. This chain is ATP synthase gamma chain, found in Histophilus somni (strain 2336) (Haemophilus somnus).